The sequence spans 515 residues: WUSCHEL-related homeobox 12 (515 aa).

Composition is skewed to polar residues over residues 23–32 and 44–57; these read QQQPDMNGNG and TAAT…SLLS. Disordered regions lie at residues 23–76, 130–156, and 176–195; these read QQQP…WNPR, NKLR…PPST, and LLAA…GSSK. The span at 62–71 shows a compositional bias: basic and acidic residues; the sequence is EGTRNPEPKP. The segment at residues 68 to 132 is a DNA-binding region (homeobox; WUS-type); the sequence is EPKPRWNPRP…NRKSRTKNKL (65 aa). Residues 130–143 are compositionally biased toward basic residues; that stretch reads NKLRAAGHHHHHGR. Composition is skewed to low complexity over residues 144–156 and 177–195; these read AAAL…PPST and LAAT…GSSK.

Belongs to the WUS homeobox family.

It localises to the nucleus. In terms of biological role, transcription factor which may be involved in developmental processes. This Oryza sativa subsp. japonica (Rice) protein is WUSCHEL-related homeobox 12 (WOX12).